A 66-amino-acid chain; its full sequence is Large ribosomal subunit protein bL33c (66 aa).

The protein belongs to the bacterial ribosomal protein bL33 family.

It is found in the plastid. The protein localises to the chloroplast. The chain is Large ribosomal subunit protein bL33c from Crucihimalaya wallichii (Rock-cress).